We begin with the raw amino-acid sequence, 292 residues long: Cholesterol ring-cleaving hydrolase IpdA subunit (292 aa).

This sequence belongs to the 3-oxoacid CoA-transferase subunit A family. In terms of assembly, heterotetramer composed of 2 IpdA subunits and 2 IpdB subunits.

It catalyses the reaction (3E)-2-(2-carboxylatoethyl)-3-methyl-6-oxocyclohex-1-ene-1-carboxyl-CoA + H2O = 6-methyl-3,7-dioxodecanedioyl-CoA. It functions in the pathway steroid metabolism; cholesterol degradation. Functionally, involved in the final steps of cholesterol and steroid degradation. Opens the last steroid ring of cholesterol by catalyzing the hydrolysis of (3E)-2-(2-carboxylatoethyl)-3-methyl-6-oxocyclohex-1-ene-1-carboxyl-CoA (COCHEA-CoA) to 6-methyl-3,7-dioxodecanedioyl-CoA (MeDODA-CoA). The protein is Cholesterol ring-cleaving hydrolase IpdA subunit of Mycobacterium tuberculosis (strain CDC 1551 / Oshkosh).